The chain runs to 199 residues: Puromycin N-acetyltransferase (199 aa).

Positions 6 to 198 (PTVRLATRDD…RTWCMTRKPG (193 aa)) constitute an N-acetyltransferase domain.

In terms of biological role, detoxification of puromycin. This is Puromycin N-acetyltransferase (pac) from Streptomyces alboniger.